Consider the following 87-residue polypeptide: Mitotic-spindle organizing protein 1 (87 aa).

The protein belongs to the MOZART1 family. As to quaternary structure, part of the gamma-tubulin complex.

It localises to the cytoplasm. It is found in the cytoskeleton. The protein resides in the microtubule organizing center. Its subcellular location is the spindle pole body. Functionally, required for gamma-tubulin complex recruitment to the microtubule organizing center (MTOC). This Chaetomium globosum (strain ATCC 6205 / CBS 148.51 / DSM 1962 / NBRC 6347 / NRRL 1970) (Soil fungus) protein is Mitotic-spindle organizing protein 1.